We begin with the raw amino-acid sequence, 514 residues long: Histidine ammonia-lyase (514 aa).

Residues Ala-143–Gly-145 constitute a cross-link (5-imidazolinone (Ala-Gly)). Position 144 is a 2,3-didehydroalanine (Ser) (Ser-144).

This sequence belongs to the PAL/histidase family. Contains an active site 4-methylidene-imidazol-5-one (MIO), which is formed autocatalytically by cyclization and dehydration of residues Ala-Ser-Gly.

Its subcellular location is the cytoplasm. It catalyses the reaction L-histidine = trans-urocanate + NH4(+). The protein operates within amino-acid degradation; L-histidine degradation into L-glutamate; N-formimidoyl-L-glutamate from L-histidine: step 1/3. This chain is Histidine ammonia-lyase, found in Photorhabdus laumondii subsp. laumondii (strain DSM 15139 / CIP 105565 / TT01) (Photorhabdus luminescens subsp. laumondii).